We begin with the raw amino-acid sequence, 250 residues long: L-ascorbate peroxidase, cytosolic (250 aa).

Catalysis depends on His42, which acts as the Proton acceptor. The tract at residues 113 to 137 (VPFHPGREDKPEPPPEGRLPDATKG) is disordered. Residues 117-137 (PGREDKPEPPPEGRLPDATKG) are compositionally biased toward basic and acidic residues. Residue His163 participates in heme b binding. Residues Thr164, Thr180, Asn182, Ile185, and Asp187 each contribute to the K(+) site.

Belongs to the peroxidase family. Ascorbate peroxidase subfamily. Heme b is required as a cofactor.

The protein localises to the cytoplasm. The enzyme catalyses L-ascorbate + H2O2 = L-dehydroascorbate + 2 H2O. Functionally, plays a key role in hydrogen peroxide removal. The polypeptide is L-ascorbate peroxidase, cytosolic (APX1) (Pisum sativum (Garden pea)).